Here is a 646-residue protein sequence, read N- to C-terminus: bZIP transcription factor 39 (646 aa).

Topologically, residues Met1–Lys311 are cytoplasmic. Residues His25–Asp172 are disordered. The span at Leu43–Asp53 shows a compositional bias: low complexity. Over residues Phe59–Ser69 the composition is skewed to basic and acidic residues. Residues Glu71–Asn98 show a composition bias toward low complexity. Positions Glu103 to Arg113 are enriched in basic and acidic residues. Residues Asp159–Asp172 are compositionally biased toward acidic residues. A bZIP domain is found at Asp172–Leu232. Residues Arg174–Lys205 are basic motif. Residues Ile211 to Ile218 are leucine-zipper. A disordered region spans residues Leu272 to Lys308. The span at Lys279–Lys288 shows a compositional bias: low complexity. Residues Lys291–Ser303 show a composition bias toward basic and acidic residues. The chain crosses the membrane as a helical span at residues Val312–Pro332. Residues Gly333–Asn646 lie on the Lumenal side of the membrane. Residues Asn371, Asn399, Asn525, Asn530, Asn565, and Asn571 are each glycosylated (N-linked (GlcNAc...) asparagine). Residues Thr560–Pro585 are disordered. Positions Lys562–Pro585 are enriched in polar residues.

The protein belongs to the bZIP family. Highly expressed in leaf blade, and at lower levels in roots, leaf sheaths, flowers and seeds.

The protein localises to the endoplasmic reticulum membrane. It localises to the nucleus. Transcription factor involved in endoplasmic reticulum (ER) stress response. Acts as a ER stress sensor and activates the transcription factor BZIP50 and the chaperone BIP1. This chain is bZIP transcription factor 39, found in Oryza sativa subsp. japonica (Rice).